We begin with the raw amino-acid sequence, 257 residues long: MLVIISPAKTLDYESPLATERFTQPELLDKSKQLIKICRDLTPVQISKLMGISDKLAGLNAARFGDWQPKFTPENARQALLAFKGDVYTGLHAQDFSEDDFDFAQQHLRMLSGLYGVLRPLDLMMPYRLEMGIKLDNAKGKDLYSFWGEQITKKLNEALEQQGDDVVVNLASDEYFKSVKPAKLHGELIKPVFLDEKNGKYKVISFYAKKARGLMSRFIIKNRLTQREQLLDFNLEGYAFDEANSQGNELVFKRPEQ.

This sequence belongs to the UPF0246 family.

The polypeptide is UPF0246 protein Spro_0686 (Serratia proteamaculans (strain 568)).